Here is a 541-residue protein sequence, read N- to C-terminus: Chaperonin GroEL 1 (541 aa).

ATP-binding positions include 29 to 32 (TLGP), 86 to 90 (DGTTT), Gly-413, 478 to 480 (NAA), and Asp-494. Positions 520 to 541 (VVEKPAEAEDDGHGHGHGHHHH) are disordered. Residues 523-533 (KPAEAEDDGHG) are compositionally biased toward basic and acidic residues.

The protein belongs to the chaperonin (HSP60) family. In terms of assembly, forms a cylinder of 14 subunits composed of two heptameric rings stacked back-to-back. Interacts with the co-chaperonin GroES.

It localises to the cytoplasm. It catalyses the reaction ATP + H2O + a folded polypeptide = ADP + phosphate + an unfolded polypeptide.. Functionally, together with its co-chaperonin GroES, plays an essential role in assisting protein folding. The GroEL-GroES system forms a nano-cage that allows encapsulation of the non-native substrate proteins and provides a physical environment optimized to promote and accelerate protein folding. This Mycolicibacterium gilvum (strain PYR-GCK) (Mycobacterium gilvum (strain PYR-GCK)) protein is Chaperonin GroEL 1.